The following is a 192-amino-acid chain: Inosine triphosphate pyrophosphatase (192 aa).

10–15 contacts ITP; it reads TGNANK. Mg(2+) is bound at residue E43. ITP-binding positions include K56, 74–75, K91, 149–152, K173, and 178–179; these read DT, FGWD, and HR.

Belongs to the HAM1 NTPase family. Homodimer. Mg(2+) is required as a cofactor. Requires Mn(2+) as cofactor.

Its subcellular location is the cytoplasm. It localises to the nucleus. It catalyses the reaction ITP + H2O = IMP + diphosphate + H(+). The enzyme catalyses dITP + H2O = dIMP + diphosphate + H(+). The catalysed reaction is XTP + H2O = XMP + diphosphate + H(+). Its function is as follows. Pyrophosphatase that hydrolyzes non-canonical purine nucleotides such as inosine triphosphate (ITP), deoxyinosine triphosphate (dITP) or xanthosine 5'-triphosphate (XTP) to their respective monophosphate derivatives. The enzyme does not distinguish between the deoxy- and ribose forms. Probably excludes non-canonical purines from RNA and DNA precursor pools, thus preventing their incorporation into RNA and DNA and avoiding chromosomal lesions. This Candida glabrata (strain ATCC 2001 / BCRC 20586 / JCM 3761 / NBRC 0622 / NRRL Y-65 / CBS 138) (Yeast) protein is Inosine triphosphate pyrophosphatase.